The following is a 206-amino-acid chain: MAKFDVYDLSKKKVGELDLADAVFAGEVNEHLFYEVVKAKLASDRSGTHAVKNRSLVSGGGKKPWKQKHTGRARQGSTRASQWVGGGKAMGPKPRDYSYDVPKKVRKAALRSALALRSKDQKLVIVQEWKPEGPKTAAAAKVLAALGAKKALVVDDAANLALARSVRNLAGSDFLAVEGLNVYDILRHDALVLTADTAKKLEASLS.

The tract at residues 48–97 (THAVKNRSLVSGGGKKPWKQKHTGRARQGSTRASQWVGGGKAMGPKPRDY) is disordered. Residues 63 to 72 (KPWKQKHTGR) show a composition bias toward basic residues.

This sequence belongs to the universal ribosomal protein uL4 family. Part of the 50S ribosomal subunit.

Functionally, one of the primary rRNA binding proteins, this protein initially binds near the 5'-end of the 23S rRNA. It is important during the early stages of 50S assembly. It makes multiple contacts with different domains of the 23S rRNA in the assembled 50S subunit and ribosome. Forms part of the polypeptide exit tunnel. This chain is Large ribosomal subunit protein uL4, found in Anaeromyxobacter dehalogenans (strain 2CP-C).